A 207-amino-acid polypeptide reads, in one-letter code: Fibroblast growth factor 18 (207 aa).

Residues 1–27 form the signal peptide; that stretch reads MYSAPSACTCLCLHFLLLCFQVQVLAA. Asn-39 carries an N-linked (GlcNAc...) asparagine glycan. Cys-109 and Cys-127 are oxidised to a cystine. Asn-137 carries N-linked (GlcNAc...) asparagine glycosylation. Residues 157–183 form a disordered region; the sequence is GRPRKGPKTRENQQDVHFMKRYPKGQT. The span at 164-174 shows a compositional bias: basic and acidic residues; that stretch reads KTRENQQDVHF.

It belongs to the heparin-binding growth factors family. Interacts with FGFR3 and FGFR4. Mainly expressed in the lung. Not detected in brain, heart, liver, kidney and small intestine.

Its subcellular location is the secreted. Functionally, plays an important role in the regulation of cell proliferation, cell differentiation and cell migration. Required for normal ossification and bone development. Stimulates hepatic and intestinal proliferation. The protein is Fibroblast growth factor 18 (Fgf18) of Rattus norvegicus (Rat).